The sequence spans 310 residues: tRNA-cytidine(32) 2-sulfurtransferase (310 aa).

The PP-loop motif signature appears at 48–53 (SGGKDS). Residues C123, C126, and C214 each contribute to the [4Fe-4S] cluster site.

Belongs to the TtcA family. In terms of assembly, homodimer. Mg(2+) serves as cofactor. [4Fe-4S] cluster is required as a cofactor.

The protein localises to the cytoplasm. It carries out the reaction cytidine(32) in tRNA + S-sulfanyl-L-cysteinyl-[cysteine desulfurase] + AH2 + ATP = 2-thiocytidine(32) in tRNA + L-cysteinyl-[cysteine desulfurase] + A + AMP + diphosphate + H(+). The protein operates within tRNA modification. Its function is as follows. Catalyzes the ATP-dependent 2-thiolation of cytidine in position 32 of tRNA, to form 2-thiocytidine (s(2)C32). The sulfur atoms are provided by the cysteine/cysteine desulfurase (IscS) system. This is tRNA-cytidine(32) 2-sulfurtransferase from Vibrio cholerae serotype O1 (strain ATCC 39315 / El Tor Inaba N16961).